Consider the following 779-residue polypeptide: Nucleus-vacuole junction protein 2 (779 aa).

Residues M1–F2 lie on the Cytoplasmic side of the membrane. The chain crosses the membrane as a helical; Signal-anchor for type II membrane protein span at residues F3–I23. The Lumenal portion of the chain corresponds to Y24–L779. Residue N233 is glycosylated (N-linked (GlcNAc...) asparagine). An SMP-LTD domain is found at S238 to F429. Over residues P454 to K465 the composition is skewed to basic and acidic residues. Disordered regions lie at residues P454 to S539 and L573 to L592. Residue S473 is modified to Phosphoserine. Residues R484–S494 show a composition bias toward polar residues. 2 N-linked (GlcNAc...) asparagine glycosylation sites follow: N489 and N536. Residues N640 and N660 are each glycosylated (N-linked (GlcNAc...) asparagine). The interval Q654–L779 is disordered. Positions N660–E674 are enriched in polar residues. A compositionally biased stretch (basic and acidic residues) spans K675 to V691. A compositionally biased stretch (polar residues) spans G733 to Q750.

It localises to the endoplasmic reticulum membrane. The protein resides in the nucleus membrane. In terms of biological role, during endoplasmic reticulum (ER) stress or when cellular ceramide levels increase, induces contacts between the ER and medial-Golgi complex to facilitate non-vesicular transport of ceramides from the ER to the Golgi complex where they are converted to complex sphingolipids, preventing toxic ceramide accumulation. In Schizosaccharomyces pombe (strain 972 / ATCC 24843) (Fission yeast), this protein is Nucleus-vacuole junction protein 2 (nvj2).